Here is a 200-residue protein sequence, read N- to C-terminus: Dephospho-CoA kinase (200 aa).

Residues 4–200 enclose the DPCK domain; that stretch reads VLALTGGIAT…QLLIKIKEEG (197 aa). An ATP-binding site is contributed by 12–17; sequence ATGKST.

The protein belongs to the CoaE family.

The protein localises to the cytoplasm. It catalyses the reaction 3'-dephospho-CoA + ATP = ADP + CoA + H(+). It participates in cofactor biosynthesis; coenzyme A biosynthesis; CoA from (R)-pantothenate: step 5/5. Catalyzes the phosphorylation of the 3'-hydroxyl group of dephosphocoenzyme A to form coenzyme A. This chain is Dephospho-CoA kinase, found in Lactobacillus acidophilus (strain ATCC 700396 / NCK56 / N2 / NCFM).